We begin with the raw amino-acid sequence, 106 residues long: Guianensin (106 aa).

The first 19 residues, 1-19, serve as a signal peptide directing secretion; it reads MKIALICSVFLVCLAYTWA. Positions 24 to 74 constitute a BPTI/Kunitz inhibitor domain; that stretch reads CSLPMNDGLCRALHKRYYYDSATKTCKMFYYGGCAGNANNFETKRACAEKC. 3 disulfide bridges follow: Cys24/Cys74, Cys33/Cys57, and Cys49/Cys70. Basic residues predominate over residues 84–93; sequence RKRKPKKKKN. A disordered region spans residues 84-106; sequence RKRKPKKKKNNKESSEMTIINMD.

It belongs to the venom Kunitz-type family. Monomer. Interacts with mouse, bovine and human coagulation factor X (F10) (activated). Interacts with human coagulation factor XI (F11) (activated). Interacts with human coagulation factor IX (F9) (activated). Interacts with host plasmin (PLG). Interacts with host kallikrein. In terms of tissue distribution, female salivary gland (at protein level).

The protein localises to the secreted. Salivary anticoagulant that targets host coagulation factor Xa (F10). Blocks activity of host prothrombinase (F10-F5). Inhibits factor Xa-mediated acute inflammation in the host. Inhibits other host proteases involved in blood coagulation and inflammation: cathepsin G (CTSG), kallikrein, trypsin, alpha-chymotrypsin, beta-tryptase, plasmin (PLG), elastase, proteinase 3 (PRTN3) and coagulation factor XIa (F11). Inhibits lipopolysaccharide-induced procoagulant effect in human endothelial cells. Inhibits Xa-mediated cleavage of protease-activated receptor 2 (PAR-2/F2RL1) in the host. This is Guianensin from Simulium guianense (Black fly).